We begin with the raw amino-acid sequence, 177 residues long: Large ribosomal subunit protein uL6 (177 aa).

The protein belongs to the universal ribosomal protein uL6 family. Part of the 50S ribosomal subunit.

This protein binds to the 23S rRNA, and is important in its secondary structure. It is located near the subunit interface in the base of the L7/L12 stalk, and near the tRNA binding site of the peptidyltransferase center. The chain is Large ribosomal subunit protein uL6 from Histophilus somni (strain 129Pt) (Haemophilus somnus).